A 349-amino-acid polypeptide reads, in one-letter code: ALA-interacting subunit 3 (349 aa).

Residues 1–21 are compositionally biased toward low complexity; it reads MSSNTASSSAGAAGSGDSSAA. The disordered stretch occupies residues 1–30; sequence MSSNTASSSAGAAGSGDSSAARKNSKRPKY. At S2 the chain carries N-acetylserine. The chain crosses the membrane as a helical span at residues 50–70; that stretch reads VISTFLIVSVIFIPLGVISLF. Residues N181, N190, and N223 are each glycosylated (N-linked (GlcNAc...) asparagine). A helical membrane pass occupies residues 305-325; the sequence is LGIAYLTVGGICFILALAFTI.

It belongs to the CDC50/LEM3 family. In terms of assembly, interacts with ALA2 and ALA3 in a heterologous system. Expressed in roots, leaves, stems, flowers and siliques.

The protein localises to the golgi apparatus membrane. It localises to the prevacuolar compartment membrane. Its subcellular location is the endoplasmic reticulum membrane. Functionally, required for the lipid transport activity of the ALA/ALIS P4-ATPase complex. This Arabidopsis thaliana (Mouse-ear cress) protein is ALA-interacting subunit 3 (ALIS3).